Consider the following 70-residue polypeptide: Large ribosomal subunit protein bL31 (70 aa).

Residues Cys16, Cys18, Cys37, and Cys40 each coordinate Zn(2+).

It belongs to the bacterial ribosomal protein bL31 family. Type A subfamily. As to quaternary structure, part of the 50S ribosomal subunit. It depends on Zn(2+) as a cofactor.

Binds the 23S rRNA. The chain is Large ribosomal subunit protein bL31 from Shewanella oneidensis (strain ATCC 700550 / JCM 31522 / CIP 106686 / LMG 19005 / NCIMB 14063 / MR-1).